A 335-amino-acid polypeptide reads, in one-letter code: Nucleoid-associated protein PputW619_4243 (335 aa).

This sequence belongs to the YejK family.

The protein resides in the cytoplasm. The protein localises to the nucleoid. This is Nucleoid-associated protein PputW619_4243 from Pseudomonas putida (strain W619).